The sequence spans 221 residues: HTH-type transcriptional regulator McbR (221 aa).

The region spanning 10-77 (VSLTLQVEND…PAQAFTVPEV (68 aa)) is the HTH gntR-type domain. Residues 37-56 (TKNLAEQLGMSITPVREALL) constitute a DNA-binding region (H-T-H motif).

Its function is as follows. Important for biofilm formation. Represses expression of McbA by binding to its promoter region, which prevents colanic acid overproduction and mucoidy. The chain is HTH-type transcriptional regulator McbR (mcbR) from Escherichia coli (strain K12).